The chain runs to 203 residues: CASP-like protein 4B2 (203 aa).

Residues 1-57 lie on the Cytoplasmic side of the membrane; sequence MAMVTADASAAADAATKQPDVEKDYSSYNGASTAGAGGGGVVESVVARWRREDMLDK. Residues 58-78 traverse the membrane as a helical segment; that stretch reads CPLALHAAAAAFAFVALVLVA. Over 79 to 92 the chain is Extracellular; the sequence is SNQHGDWMQFDRYQ. Residues 93 to 113 traverse the membrane as a helical segment; it reads EYMYLLAIAALAFAYSLAQAL. The Cytoplasmic segment spans residues 114 to 135; sequence RHAHRMRGGADPIPAPSARLFD. Residues 136 to 156 traverse the membrane as a helical segment; that stretch reads FIADQVVAYLLMSALSAAIPI. At 157-171 the chain is on the extracellular side; sequence TNRMRTAVINNFTDA. Asn167 carries N-linked (GlcNAc...) asparagine glycosylation. The helical transmembrane segment at 172–192 threads the bilayer; sequence TAAAISMAFLAFVALALSATV. Over 193-203 the chain is Cytoplasmic; sequence SGYKLSRQMYM.

It belongs to the Casparian strip membrane proteins (CASP) family. Homodimer and heterodimers.

It localises to the cell membrane. In Hordeum vulgare subsp. vulgare (Domesticated barley), this protein is CASP-like protein 4B2.